Here is a 98-residue protein sequence, read N- to C-terminus: High mobility group nucleosome-binding domain-containing protein 3 (98 aa).

Basic and acidic residues-rich tracts occupy residues 1–25 (MPKR…EPTR), 39–52 (PEPK…KEPG), 61–71 (GKKDEKQEAAK), and 80–98 (GENK…DKNE). A disordered region spans residues 1–98 (MPKRKSPEGA…KTESVGDKNE (98 aa)).

It belongs to the HMGN family.

The protein localises to the nucleus. The chain is High mobility group nucleosome-binding domain-containing protein 3 (HMGN3) from Gallus gallus (Chicken).